A 1136-amino-acid chain; its full sequence is Pesticidal crystal protein Cry4B protoxin (1136 aa).

The tract at residues 84–282 is domain I; that stretch reads TPERVWNDFM…PADKIDNTKL (199 aa). The interval 283–466 is domain II; it reads SKTEFTREIY…SNRVSFAWTH (184 aa). A domain III region spans residues 467-641; sequence KIVDPNNQIY…PITQSVLDET (175 aa).

This sequence belongs to the delta endotoxin family. In the presence of micelles active toxin forms oligomers that can be fit into cryo-EM maps as trimers. Binds to host (A.gambiae) cadherin AgCad1 (also called BT-R3), probably on the cell surface. Activated toxin may bind its host AgCad1 receptor as a monomer, but also forms an oligomer that is not active. It depends on Mg(2+) as a cofactor. Treatment of recombinant protein with A.aegypti 3rd instar larvae midgut extract for 1 hour yields major bands of 72 and 45 kDa, the combined proteins are toxic to mosquitoes. Longer digestion, which removes the 72 kDa protein, yields a non-toxic preparation. Proteolysis by yields a 65 kDa toxic protein and 48 and 17 kDa fragments which are not toxic. In terms of tissue distribution, host (A.gambiae) larval midgut; binds to host brush border membranes, probably to cadherin-AgCad1 (Cad1, also called BT-R3).

It localises to the spore. Toxic activity on Trichoplusia ni insect cells stably transfected with the AgCad1/BT-R3 receptor leads to oncosis, cell death characterized by cell swelling, membrane blebbing and depletion of energy reserves. Cell death is blocked by EDTA (but not EGTA) and is partially prevented by pretreatment with NF449 (inhibits G-s-alpha-60A and adenylyl cyclase, AC) and 2',5'-dideoxyadenosine 3'-diphosphate (ddADP, inhibits AC), while H-89 and PKAI 14-22 (both inhibit protein kinase A), ouabain (inhibits Na+/K+-ATPase) and a cell exocytosis inhibitor (Exo1) nearly completely prevent the action of the toxin in this system. The cAMP analog pCPT-cAMP and the AC activator FSK enhance toxicity. In terms of biological role, a pesticidal protein active against Aedes and Anopheles mosquito species; activity on Culex species is strain dependent. It remains toxic to permethrin-resistant strains of A.gambiae. Following activation of the protoxin by mosquito larvae midgut extract (or by chymotrypsin or trypsin treatment) it becomes insecticidal. Causes mosquito cell death by activating a host G-protein-coupled receptor which subsequently activates adenylyl cyclase and increases cAMP production. cAMP activates protein kinase A which sets off a series of downstream events which includes increased exocytosis (probably bringing more receptor to the cell membrane), Na+/K+-ATPase activation and eventual host cell death. Another group suggests that alkaline phosphatase serves as the insect receptor and that the protein forms pores in insect cell membranes. The polypeptide is Pesticidal crystal protein Cry4B protoxin (Bacillus thuringiensis subsp. israelensis).